Reading from the N-terminus, the 467-residue chain is MATGKIVQIIGAVVDVEFPQSEVPSVYDALNVTDSKERLVLEVQQQLGGGVVRCIVMGSSDGLRRGVEVVNTGAPISVPVGTKTLGRIMNVLGDAIDERGEIGAEEVYSIHREAPSYEEQSNETALLETGVKVIDLVCPFAKGGKIGLFGGAGVGKTVNMMELINNIALQHSGLSVFAGVGERTREGNDFYYEMQEAGVVNVENPEESKVAMVYGQMNEPPGNRLRVALTGLTMAERFRDEGRDVLLFVDNIYRYTLAGTEVSALLGRMPSAVGYQPTLAEEMGVLQERITSTKQGSITSVQAVYVPADDLTDPSPATTFAHLDATVVLNRNIAAMGLYPAIDPLDSTSRQLDPLVVGQDHYDTARGVQQTLQRYKELKDIIAILGMDELSEEDKQVVSRARKIERFLTQPYHVAEVFTGDPGVYVPLKETLRGFKGLLAGEYDDIPEQAFMYCGTIDDAIENAKKL.

150-157 (GGAGVGKT) provides a ligand contact to ATP.

This sequence belongs to the ATPase alpha/beta chains family. In terms of assembly, F-type ATPases have 2 components, CF(1) - the catalytic core - and CF(0) - the membrane proton channel. CF(1) has five subunits: alpha(3), beta(3), gamma(1), delta(1), epsilon(1). CF(0) has three main subunits: a(1), b(2) and c(9-12). The alpha and beta chains form an alternating ring which encloses part of the gamma chain. CF(1) is attached to CF(0) by a central stalk formed by the gamma and epsilon chains, while a peripheral stalk is formed by the delta and b chains.

Its subcellular location is the cell inner membrane. It catalyses the reaction ATP + H2O + 4 H(+)(in) = ADP + phosphate + 5 H(+)(out). Produces ATP from ADP in the presence of a proton gradient across the membrane. The catalytic sites are hosted primarily by the beta subunits. The polypeptide is ATP synthase subunit beta 1 (Vibrio campbellii (strain ATCC BAA-1116)).